A 311-amino-acid polypeptide reads, in one-letter code: tRNA(Ile)-lysidine synthase (311 aa).

ATP is bound at residue Ser-32–Ser-37.

The protein belongs to the tRNA(Ile)-lysidine synthase family.

Its subcellular location is the cytoplasm. The catalysed reaction is cytidine(34) in tRNA(Ile2) + L-lysine + ATP = lysidine(34) in tRNA(Ile2) + AMP + diphosphate + H(+). Its function is as follows. Ligates lysine onto the cytidine present at position 34 of the AUA codon-specific tRNA(Ile) that contains the anticodon CAU, in an ATP-dependent manner. Cytidine is converted to lysidine, thus changing the amino acid specificity of the tRNA from methionine to isoleucine. In Cutibacterium acnes (strain DSM 16379 / KPA171202) (Propionibacterium acnes), this protein is tRNA(Ile)-lysidine synthase.